The sequence spans 348 residues: Dihydroorotase (348 aa).

Residues histidine 17 and histidine 19 each coordinate Zn(2+). Substrate-binding positions include 19–21 (HLR) and asparagine 45. Residues lysine 103, histidine 140, and histidine 178 each contribute to the Zn(2+) site. Lysine 103 is subject to N6-carboxylysine. Histidine 140 is a binding site for substrate. Leucine 223 serves as a coordination point for substrate. Aspartate 251 is a Zn(2+) binding site. Aspartate 251 is a catalytic residue. Substrate contacts are provided by histidine 255 and alanine 267.

Belongs to the metallo-dependent hydrolases superfamily. DHOase family. Class II DHOase subfamily. As to quaternary structure, homodimer. Requires Zn(2+) as cofactor.

It catalyses the reaction (S)-dihydroorotate + H2O = N-carbamoyl-L-aspartate + H(+). Its pathway is pyrimidine metabolism; UMP biosynthesis via de novo pathway; (S)-dihydroorotate from bicarbonate: step 3/3. Functionally, catalyzes the reversible cyclization of carbamoyl aspartate to dihydroorotate. This is Dihydroorotase from Serratia proteamaculans (strain 568).